A 474-amino-acid polypeptide reads, in one-letter code: MAAPAKRARVSDASPLAAPCPVPRAAARVPLPLPAGPSGHEPESDAVAGFLRWCTRVGLELSPKVLVSRQGTVAGYGMVARESVQPGELLFAVPRSALLSPHTCSISDLLERERGALQSLSGWVPLLLALLHELQAPASPWSPYFALWPELGRLEHPMFWPEEERLRLLKGTGVPEAVEKDLVNIRSEYYSIVLPFMEAHSDLFSPTVRSLELYRQLVALVMAYSFQEPLEEEEDEKEPNSPLMVPAADILNHIANHNANLEYSAEYLRMVATQPILKGHEIFNTYGQMANWQLIHMYGFAEPYPNNTDDTADIQMVAVREAALQGTEDETERLLLCERWDFLCKQELVGEEGAFVIGREEVLTEEELATTLKVLCMPAEEFRDYKERAGWGEEETEDGSLAITNIPKLQESWKRLLRDSVLLTLQTYATDLKTEQDLLSNKEVYAKLSWREQQALQVRYGQKMILHRLLELTS.

Serine 14 is subject to Phosphoserine. In terms of domain architecture, SET spans 63-287; the sequence is PKVLVSRQGT…KGHEIFNTYG (225 aa). Lysine 64 is subject to N6-methylated lysine; by autocatalysis. S-adenosyl-L-methionine is bound at residue 74–76; that stretch reads AGY. Tryptophan 123 provides a ligand contact to substrate. Residue lysine 180 is modified to N6-methylated lysine; by autocatalysis. Tyrosine 224 is a binding site for S-adenosyl-L-methionine. Substrate is bound by residues serine 225 and glutamine 227. S-adenosyl-L-methionine contacts are provided by residues 252–253 and tyrosine 298; that span reads NH. Lysine 373 is subject to N6-methylated lysine; by autocatalysis.

It belongs to the class V-like SAM-binding methyltransferase superfamily. Histone-lysine methyltransferase family. SETD6 subfamily. In terms of assembly, monomer, homodimer and homotrimer; these structures are stabilized in the presence of S-adenosyl-L-methionine (SAM). Post-translationally, automethylated.

The protein localises to the nucleus. The enzyme catalyses L-lysyl-[protein] + S-adenosyl-L-methionine = N(6)-methyl-L-lysyl-[protein] + S-adenosyl-L-homocysteine + H(+). It carries out the reaction L-lysyl(8)-[histone H2AZ] + S-adenosyl-L-methionine = N(6)-methyl-L-lysyl(8)-[histone H2AZ] + S-adenosyl-L-homocysteine + H(+). Its function is as follows. Protein-lysine N-methyltransferase. Monomethylates 'Lys-310' of the RELA subunit of NF-kappa-B complex, leading to down-regulation of NF-kappa-B transcription factor activity. Monomethylates 'Lys-8' of H2AZ (H2AZK8me1). Required for the maintenance of embryonic stem cell self-renewal. Methylates PAK4. This chain is N-lysine methyltransferase SETD6 (Setd6), found in Rattus norvegicus (Rat).